The primary structure comprises 373 residues: Spore germination protein A3 (373 aa).

The N-terminal stretch at 1-17 (MKIRILCMFICTLLLSG) is a signal peptide. Cys-18 carries N-palmitoyl cysteine lipidation. Cys-18 is lipidated: S-diacylglycerol cysteine.

It belongs to the GerABKC lipoprotein family.

It is found in the cell membrane. Functionally, forms a complex at the inner spore membrane which acts as a receptor for L-alanine, thus is involved in the stimulation of germination in response to alanine. Can stimulate germination in the absence of GerD and GerK gene products (fructose and glucose receptors, respectively), but the response is improved in their presence. In Bacillus subtilis (strain 168), this protein is Spore germination protein A3 (gerAC).